The primary structure comprises 270 residues: Zinc transporter ZupT (270 aa).

Transmembrane regions (helical) follow at residues 8-28 (ILVVFLLTTLAGLATGIGGFI), 40-60 (LTFALGLSGGVMVYISLVELL), 78-98 (WIAIASFFGGIAVAALIDYLV), 131-151 (ILFALAIGIHNFPEGIATFAA), 162-182 (IALAVAVHNIPEGIAVAVPLY), 192-212 (LFYSFLSGLAEPVGAAIAMFF), 216-236 (FLTPTVLAVLFASVAGIMVFI), and 250-270 (HHHISIMGIIAGMLLMAIVLI). 2 residues coordinate Fe(2+): asparagine 141 and glutamate 144. The Zn(2+) site is built by glutamate 144 and histidine 169. Residues asparagine 170, glutamate 173, and glutamate 202 each coordinate Fe(2+). Glutamate 173 is a binding site for Zn(2+).

This sequence belongs to the ZIP transporter (TC 2.A.5) family. ZupT subfamily.

Its subcellular location is the cell membrane. It catalyses the reaction Zn(2+)(in) = Zn(2+)(out). Its function is as follows. Mediates zinc uptake. May also transport other divalent cations. The chain is Zinc transporter ZupT from Akkermansia muciniphila (strain ATCC BAA-835 / DSM 22959 / JCM 33894 / BCRC 81048 / CCUG 64013 / CIP 107961 / Muc).